A 238-amino-acid polypeptide reads, in one-letter code: Glycerol uptake facilitator protein 4 (238 aa).

2 helical membrane-spanning segments follow: residues I2–V22 and I39–V59. An NPA 1 motif is present at residues N62–A64. 3 consecutive transmembrane segments (helical) span residues F80 to I100, F135 to V155, and P158 to G178. The NPA 2 signature appears at N185 to A187. Residues Y211–M231 form a helical membrane-spanning segment.

It belongs to the MIP/aquaporin (TC 1.A.8) family.

It localises to the cell membrane. Functionally, transporter that facilitates the transmembrane diffusion of water, dihydroxyacetone, glycerol, urea, H(2)O(2) and D/L-lactic acid. Is involved in the cellular racemization of lactate and lactate metabolism, but has likely a more general physiological role. The transported molecule is indeed lactic acid and not the lactate anion, in agreement with the assumption that, with very few exceptions, MIPs (major intrinsic proteins) only facilitate the transport of uncharged solutes. The sequence is that of Glycerol uptake facilitator protein 4 from Lactiplantibacillus plantarum (strain ATCC BAA-793 / NCIMB 8826 / WCFS1) (Lactobacillus plantarum).